Consider the following 431-residue polypeptide: Gamma-glutamyl phosphate reductase (431 aa).

The protein belongs to the gamma-glutamyl phosphate reductase family.

The protein resides in the cytoplasm. The catalysed reaction is L-glutamate 5-semialdehyde + phosphate + NADP(+) = L-glutamyl 5-phosphate + NADPH + H(+). Its pathway is amino-acid biosynthesis; L-proline biosynthesis; L-glutamate 5-semialdehyde from L-glutamate: step 2/2. Its function is as follows. Catalyzes the NADPH-dependent reduction of L-glutamate 5-phosphate into L-glutamate 5-semialdehyde and phosphate. The product spontaneously undergoes cyclization to form 1-pyrroline-5-carboxylate. The polypeptide is Gamma-glutamyl phosphate reductase (Methylobacterium nodulans (strain LMG 21967 / CNCM I-2342 / ORS 2060)).